The following is a 150-amino-acid chain: Regulatory protein RecX (150 aa).

It belongs to the RecX family.

It is found in the cytoplasm. Its function is as follows. Modulates RecA activity. In Legionella pneumophila (strain Corby), this protein is Regulatory protein RecX.